The sequence spans 309 residues: Ribose-phosphate pyrophosphokinase (309 aa).

ATP is bound by residues 37–39 (DGE) and 96–97 (RQ). Positions 130 and 169 each coordinate Mg(2+). Lys-192 is a catalytic residue. Residues Arg-194, Asp-218, and 222–226 (DTAGT) contribute to the D-ribose 5-phosphate site.

The protein belongs to the ribose-phosphate pyrophosphokinase family. Class I subfamily. As to quaternary structure, homohexamer. Mg(2+) is required as a cofactor.

Its subcellular location is the cytoplasm. The catalysed reaction is D-ribose 5-phosphate + ATP = 5-phospho-alpha-D-ribose 1-diphosphate + AMP + H(+). Its pathway is metabolic intermediate biosynthesis; 5-phospho-alpha-D-ribose 1-diphosphate biosynthesis; 5-phospho-alpha-D-ribose 1-diphosphate from D-ribose 5-phosphate (route I): step 1/1. In terms of biological role, involved in the biosynthesis of the central metabolite phospho-alpha-D-ribosyl-1-pyrophosphate (PRPP) via the transfer of pyrophosphoryl group from ATP to 1-hydroxyl of ribose-5-phosphate (Rib-5-P). This chain is Ribose-phosphate pyrophosphokinase, found in Helicobacter hepaticus (strain ATCC 51449 / 3B1).